The sequence spans 409 residues: MEEYEDFEMEDLSELVSYMDYLETQRLTISQLDYSLSIPPQLLVSREISKLEDEVCEMLKESSLFQLFRKHKGYLNVTDLVLPLWCEVQHEYYLLRRIKKKTPKMERGIKLHQILEYETSPPSERRVLDRTSKEEPWALRLLRQLEGIMLLQKNGITREFPIWGYYKESSIFGIIDEISLNNPSKSNFNSDIRNYFNFKMYDLSFVDNKTRFSSRKPGASQILSSKVQLMYYVHLFLNYFPSLGEKQQSIFRDISPTYSNRLHSQSHWWNMFLSQLSLDGTKDLGPKFLEQSILSIPDIPEDVFAGHNSLNGLYALVFASAKKLHLRLTDDNLTIAYRNDKTGEVVYKDKFSFSNKLLEASYTKAYQFWHNLREPEGVPAEEVYKCRSCEFQKECWWLKKKQYYPLSSP.

Cys-86 contributes to the [4Fe-4S] cluster binding site. Positions 176 and 207 each coordinate Mg(2+). Residues Cys-386, Cys-389, and Cys-395 each coordinate [4Fe-4S] cluster.

It belongs to the EXO5 family. In terms of assembly, monomer. Mg(2+) is required as a cofactor. It depends on [4Fe-4S] cluster as a cofactor.

It is found in the cytoplasm. The protein localises to the nucleus. It localises to the mitochondrion. Functionally, single-stranded DNA (ssDNA) bidirectional exonuclease involved in DNA repair. Probably involved in DNA repair following ultraviolet (UV) irradiation and interstrand cross-links (ICLs) damage. Has both 5'-3' and 3'-5' exonuclease activities with a strong preference for 5'-ends. Acts as a sliding exonuclease that loads at ssDNA ends and then slides along the ssDNA prior to cutting; however the sliding and the 3'-5' exonuclease activities are abolished upon binding to the replication protein A (RPA) complex that enforces 5'-directionality activity. Its function is as follows. Plays a redundant role with the flap endonuclease FEN1/rad2 for the maintenance of mitochondrial DNA. The sequence is that of Exonuclease V (exo5) from Schizosaccharomyces pombe (strain 972 / ATCC 24843) (Fission yeast).